The primary structure comprises 142 residues: Large ribosomal subunit protein uL13c (142 aa).

The protein belongs to the universal ribosomal protein uL13 family. In terms of assembly, part of the 50S ribosomal subunit.

The protein localises to the plastid. The protein resides in the chloroplast. This chain is Large ribosomal subunit protein uL13c, found in Pyropia yezoensis (Susabi-nori).